The following is a 123-amino-acid chain: Probable prefoldin subunit 4 (123 aa).

The protein belongs to the prefoldin subunit beta family. Heterohexamer of two PFD-alpha type and four PFD-beta type subunits.

In terms of biological role, binds specifically to cytosolic chaperonin (c-CPN) and transfers target proteins to it. Binds to nascent polypeptide chain and promotes folding in an environment in which there are many competing pathways for nonnative proteins. The protein is Probable prefoldin subunit 4 of Schizosaccharomyces pombe (strain 972 / ATCC 24843) (Fission yeast).